The chain runs to 202 residues: dTTP/UTP pyrophosphatase (202 aa).

Aspartate 76 (proton acceptor) is an active-site residue.

Belongs to the Maf family. YhdE subfamily. It depends on a divalent metal cation as a cofactor.

It is found in the cytoplasm. The catalysed reaction is dTTP + H2O = dTMP + diphosphate + H(+). It carries out the reaction UTP + H2O = UMP + diphosphate + H(+). Its function is as follows. Nucleoside triphosphate pyrophosphatase that hydrolyzes dTTP and UTP. May have a dual role in cell division arrest and in preventing the incorporation of modified nucleotides into cellular nucleic acids. The chain is dTTP/UTP pyrophosphatase from Neisseria meningitidis serogroup B (strain ATCC BAA-335 / MC58).